The primary structure comprises 118 residues: DNA-binding protein SSO0352 (118 aa).

This sequence belongs to the PDCD5 family.

This is DNA-binding protein SSO0352 from Saccharolobus solfataricus (strain ATCC 35092 / DSM 1617 / JCM 11322 / P2) (Sulfolobus solfataricus).